The primary structure comprises 458 residues: Mitochondrial-processing peptidase subunit beta (458 aa).

The transit peptide at 1 to 41 (MYRRLASGLYQTSQRRIAQVQPKSVFVPETIVTTLPNGFRV) directs the protein to the mitochondrion. Histidine 73 serves as a coordination point for Zn(2+). Residue glutamate 76 is the Proton acceptor of the active site. Zn(2+) contacts are provided by histidine 77 and glutamate 153.

It belongs to the peptidase M16 family. In terms of assembly, heterodimer of mppa-1 (alpha) and mppb-1 (beta) subunits, forming the mitochondrial processing protease (MPP) in which mppa-1 is involved in substrate recognition and binding and mppb-1 is the catalytic subunit. Requires Zn(2+) as cofactor.

The protein localises to the mitochondrion matrix. It carries out the reaction Release of N-terminal transit peptides from precursor proteins imported into the mitochondrion, typically with Arg in position P2.. With respect to regulation, binding to mppa-1 is required for catalytic activity. Inhibited by metal chelator ethylenediaminetetraacetic acid (EDTA). Its function is as follows. Catalytic subunit of the essential mitochondrial processing protease (MPP), which cleaves the mitochondrial sequence off newly imported precursors proteins. Preferentially, cleaves after an arginine at position P2. This Caenorhabditis elegans protein is Mitochondrial-processing peptidase subunit beta.